A 322-amino-acid polypeptide reads, in one-letter code: uncharacterized protein (322 aa).

Helical transmembrane passes span 7–27 (IQKIAPAAIGACLFVLSIGAI), 54–74 (AFALMLINYIILTGYDTLAMF), 87–107 (FVGFVSYAISNSVGLALLSGS), 128–148 (IAFCNLSFWVGLLTVGGITFV), 162–182 (FLSVHPIGFTFLAIIGIYLLI), 209–229 (IGLTAVDWILASGILYVLLPG), 249–269 (GIISNVPGGLGVFETVVLFLL), and 287–307 (VIYYWIPLGSASLSLGAFELL).

It to E.coli YbhN.

The protein resides in the cell membrane. This is an uncharacterized protein from Synechocystis sp. (strain ATCC 27184 / PCC 6803 / Kazusa).